Here is a 155-residue protein sequence, read N- to C-terminus: 2-C-methyl-D-erythritol 2,4-cyclodiphosphate synthase (155 aa).

A divalent metal cation is bound by residues D8 and H10. Residues 8–10 (DVH) and 34–35 (HS) contribute to the 4-CDP-2-C-methyl-D-erythritol 2-phosphate site. H42 serves as a coordination point for a divalent metal cation. 4-CDP-2-C-methyl-D-erythritol 2-phosphate contacts are provided by residues 56 to 58 (DIG), 61 to 65 (FPDSD), 132 to 135 (TTEE), F139, and R142.

Belongs to the IspF family. Homotrimer. A divalent metal cation serves as cofactor.

The catalysed reaction is 4-CDP-2-C-methyl-D-erythritol 2-phosphate = 2-C-methyl-D-erythritol 2,4-cyclic diphosphate + CMP. The protein operates within isoprenoid biosynthesis; isopentenyl diphosphate biosynthesis via DXP pathway; isopentenyl diphosphate from 1-deoxy-D-xylulose 5-phosphate: step 4/6. Involved in the biosynthesis of isopentenyl diphosphate (IPP) and dimethylallyl diphosphate (DMAPP), two major building blocks of isoprenoid compounds. Catalyzes the conversion of 4-diphosphocytidyl-2-C-methyl-D-erythritol 2-phosphate (CDP-ME2P) to 2-C-methyl-D-erythritol 2,4-cyclodiphosphate (ME-CPP) with a corresponding release of cytidine 5-monophosphate (CMP). This is 2-C-methyl-D-erythritol 2,4-cyclodiphosphate synthase from Clostridium acetobutylicum (strain ATCC 824 / DSM 792 / JCM 1419 / IAM 19013 / LMG 5710 / NBRC 13948 / NRRL B-527 / VKM B-1787 / 2291 / W).